Here is a 222-residue protein sequence, read N- to C-terminus: 3,4-dihydroxy-2-butanone 4-phosphate synthase (222 aa).

Residues 37–38 (RE), Asp-42, 150–154 (RPGHT), and Glu-174 contribute to the D-ribulose 5-phosphate site. Residue Glu-38 participates in Mg(2+) binding. His-153 lines the Mg(2+) pocket.

It belongs to the DHBP synthase family. As to quaternary structure, homodimer. It depends on Mg(2+) as a cofactor. Mn(2+) serves as cofactor.

The catalysed reaction is D-ribulose 5-phosphate = (2S)-2-hydroxy-3-oxobutyl phosphate + formate + H(+). Its pathway is cofactor biosynthesis; riboflavin biosynthesis; 2-hydroxy-3-oxobutyl phosphate from D-ribulose 5-phosphate: step 1/1. Functionally, catalyzes the conversion of D-ribulose 5-phosphate to formate and 3,4-dihydroxy-2-butanone 4-phosphate. The protein is 3,4-dihydroxy-2-butanone 4-phosphate synthase of Chlorobium limicola (strain DSM 245 / NBRC 103803 / 6330).